The primary structure comprises 688 residues: Elongation factor G (688 aa).

Residues 6–280 (KLFRNFGIMA…AVVDFLPSPI (275 aa)) form the tr-type G domain. GTP is bound by residues 15 to 22 (AHIDAGKT), 79 to 83 (DTPGH), and 133 to 136 (NKMD).

Belongs to the TRAFAC class translation factor GTPase superfamily. Classic translation factor GTPase family. EF-G/EF-2 subfamily.

It localises to the cytoplasm. Functionally, catalyzes the GTP-dependent ribosomal translocation step during translation elongation. During this step, the ribosome changes from the pre-translocational (PRE) to the post-translocational (POST) state as the newly formed A-site-bound peptidyl-tRNA and P-site-bound deacylated tRNA move to the P and E sites, respectively. Catalyzes the coordinated movement of the two tRNA molecules, the mRNA and conformational changes in the ribosome. This chain is Elongation factor G, found in Ureaplasma parvum serovar 3 (strain ATCC 27815 / 27 / NCTC 11736).